Here is a 173-residue protein sequence, read N- to C-terminus: Crossover junction endodeoxyribonuclease RuvC (173 aa).

Active-site residues include Asp8, Glu67, and Asp139. Mg(2+) is bound by residues Asp8, Glu67, and Asp139.

The protein belongs to the RuvC family. In terms of assembly, homodimer which binds Holliday junction (HJ) DNA. The HJ becomes 2-fold symmetrical on binding to RuvC with unstacked arms; it has a different conformation from HJ DNA in complex with RuvA. In the full resolvosome a probable DNA-RuvA(4)-RuvB(12)-RuvC(2) complex forms which resolves the HJ. Mg(2+) serves as cofactor.

Its subcellular location is the cytoplasm. The catalysed reaction is Endonucleolytic cleavage at a junction such as a reciprocal single-stranded crossover between two homologous DNA duplexes (Holliday junction).. Functionally, the RuvA-RuvB-RuvC complex processes Holliday junction (HJ) DNA during genetic recombination and DNA repair. Endonuclease that resolves HJ intermediates. Cleaves cruciform DNA by making single-stranded nicks across the HJ at symmetrical positions within the homologous arms, yielding a 5'-phosphate and a 3'-hydroxyl group; requires a central core of homology in the junction. The consensus cleavage sequence is 5'-(A/T)TT(C/G)-3'. Cleavage occurs on the 3'-side of the TT dinucleotide at the point of strand exchange. HJ branch migration catalyzed by RuvA-RuvB allows RuvC to scan DNA until it finds its consensus sequence, where it cleaves and resolves the cruciform DNA. This chain is Crossover junction endodeoxyribonuclease RuvC, found in Serratia proteamaculans (strain 568).